The following is a 699-amino-acid chain: Elongation factor G (699 aa).

A tr-type G domain is found at 8–288 (EDYRNFGIMA…AVVDYLPSPL (281 aa)). GTP contacts are provided by residues 17–24 (AHIDAGKT), 86–90 (DTPGH), and 140–143 (NKMD).

The protein belongs to the TRAFAC class translation factor GTPase superfamily. Classic translation factor GTPase family. EF-G/EF-2 subfamily.

It is found in the cytoplasm. Functionally, catalyzes the GTP-dependent ribosomal translocation step during translation elongation. During this step, the ribosome changes from the pre-translocational (PRE) to the post-translocational (POST) state as the newly formed A-site-bound peptidyl-tRNA and P-site-bound deacylated tRNA move to the P and E sites, respectively. Catalyzes the coordinated movement of the two tRNA molecules, the mRNA and conformational changes in the ribosome. This Rhizobium etli (strain ATCC 51251 / DSM 11541 / JCM 21823 / NBRC 15573 / CFN 42) protein is Elongation factor G.